The sequence spans 443 residues: 3-ketoacyl-CoA thiolase 1, peroxisomal (443 aa).

The transit peptide at 1-30 (MEKATERQRILLRHLQPSSSSDASLSASAC) directs the protein to the peroxisome. The Acyl-thioester intermediate role is filled by Cys130. Residues His385 and Cys417 each act as proton acceptor in the active site.

It belongs to the thiolase-like superfamily. Thiolase family. Homodimer. In terms of tissue distribution, low levels in seedlings and leaves.

The protein localises to the peroxisome. It catalyses the reaction an acyl-CoA + acetyl-CoA = a 3-oxoacyl-CoA + CoA. The protein operates within lipid metabolism; fatty acid metabolism. Functionally, involved in fatty-acid beta-oxidation prior to gluconeogenesis during germination and subsequent seedling growth. Implicated in jasmonic acid (JA) biosynthesis. This is 3-ketoacyl-CoA thiolase 1, peroxisomal (KAT1) from Arabidopsis thaliana (Mouse-ear cress).